Here is a 115-residue protein sequence, read N- to C-terminus: MSDALDDENVLCFRYKSYYIKDDGSRIDTLNEERIKHIVDFTLDKYLDATQNTPKFDNFENPVKEGFNSIFACESKEAAIEYYKEFKKQIEQKKLPIKIASIIAQTKVVMNKKLV.

Its function is as follows. The middle section of a putative type I restriction enzyme that if reconstituted might recognize 5'-GAN(7)TAY-3' and cleave a random distance away. Subunit R is required for both nuclease and ATPase activities, but not for modification. The polypeptide is Putative type I restriction enzyme MpnIIP endonuclease subunit middle part (Mycoplasma pneumoniae (strain ATCC 29342 / M129 / Subtype 1) (Mycoplasmoides pneumoniae)).